The sequence spans 443 residues: Glutamine synthetase (443 aa).

The GS beta-grasp domain occupies 16–97; the sequence is KRIKFVQLIF…VYGYIYKDGK (82 aa). The GS catalytic domain occupies 103–443; sequence PRGVLRRTLE…EWELERYFFI (341 aa). Mg(2+) contacts are provided by glutamate 126 and glutamate 128. Glutamate 176 contributes to the ATP binding site. Mg(2+) is bound by residues glutamate 181 and glutamate 188. Glycine 233 lines the L-glutamate pocket. Histidine 237 contacts Mg(2+). ATP is bound by residues 239–241 and serine 241; that span reads HIS. Residues arginine 287, glutamate 293, and arginine 305 each coordinate L-glutamate. ATP contacts are provided by arginine 305 and arginine 310. Glutamate 322 contacts Mg(2+). Arginine 324 is a binding site for L-glutamate.

This sequence belongs to the glutamine synthetase family. As to quaternary structure, oligomer of 12 subunits arranged in the form of two hexagons. Requires Mg(2+) as cofactor.

The protein resides in the cytoplasm. It carries out the reaction L-glutamate + NH4(+) + ATP = L-glutamine + ADP + phosphate + H(+). Functionally, probably involved in nitrogen metabolism via ammonium assimilation. Catalyzes the ATP-dependent biosynthesis of glutamine from glutamate and ammonia. This chain is Glutamine synthetase, found in Pyrococcus horikoshii (strain ATCC 700860 / DSM 12428 / JCM 9974 / NBRC 100139 / OT-3).